The primary structure comprises 536 residues: Phosphoenolpyruvate carboxykinase (ATP) (536 aa).

Substrate contacts are provided by R61, Y195, and K201. ATP contacts are provided by residues K201, H220, and 236–244; that span reads GLSGTGKTT. K201 and H220 together coordinate Mn(2+). D257 serves as a coordination point for Mn(2+). Positions 285, 322, and 447 each coordinate ATP. Substrate is bound at residue R322.

The protein belongs to the phosphoenolpyruvate carboxykinase (ATP) family. It depends on Mn(2+) as a cofactor.

The protein resides in the cytoplasm. The catalysed reaction is oxaloacetate + ATP = phosphoenolpyruvate + ADP + CO2. The protein operates within carbohydrate biosynthesis; gluconeogenesis. Involved in the gluconeogenesis. Catalyzes the conversion of oxaloacetate (OAA) to phosphoenolpyruvate (PEP) through direct phosphoryl transfer between the nucleoside triphosphate and OAA. This chain is Phosphoenolpyruvate carboxykinase (ATP), found in Allorhizobium ampelinum (strain ATCC BAA-846 / DSM 112012 / S4) (Agrobacterium vitis (strain S4)).